The sequence spans 483 residues: Isocitrate dehydrogenase [NADP] (483 aa).

Thr-74 is a binding site for NADP(+). Positions 83, 85, 89, 99, and 121 each coordinate D-threo-isocitrate. A Mg(2+)-binding site is contributed by Asp-232. Residues 264-270 and Asn-277 each bind NADP(+); that span reads HGSAPDI.

This sequence belongs to the isocitrate and isopropylmalate dehydrogenases family. In terms of assembly, homodimer. Requires Mg(2+) as cofactor. It depends on Mn(2+) as a cofactor.

The catalysed reaction is D-threo-isocitrate + NADP(+) = 2-oxoglutarate + CO2 + NADPH. In terms of biological role, catalyzes the oxidative decarboxylation of isocitrate to 2-oxoglutarate and carbon dioxide with the concomitant reduction of NADP(+). The protein is Isocitrate dehydrogenase [NADP] (icd) of Rickettsia typhi (strain ATCC VR-144 / Wilmington).